Reading from the N-terminus, the 611-residue chain is Dihydroxy-acid dehydratase (611 aa).

Aspartate 82 provides a ligand contact to Mg(2+). Cysteine 123 contacts [2Fe-2S] cluster. Mg(2+) is bound by residues aspartate 124 and lysine 125. Lysine 125 carries the N6-carboxylysine modification. [2Fe-2S] cluster is bound at residue cysteine 192. Glutamate 489 is a Mg(2+) binding site. Catalysis depends on serine 515, which acts as the Proton acceptor. Over residues 565–574 (ERRKAEEARG) the composition is skewed to basic and acidic residues. The tract at residues 565-586 (ERRKAEEARGKKAFTPPTRQRE) is disordered.

The protein belongs to the IlvD/Edd family. In terms of assembly, homodimer. [2Fe-2S] cluster is required as a cofactor. The cofactor is Mg(2+).

It catalyses the reaction (2R)-2,3-dihydroxy-3-methylbutanoate = 3-methyl-2-oxobutanoate + H2O. The enzyme catalyses (2R,3R)-2,3-dihydroxy-3-methylpentanoate = (S)-3-methyl-2-oxopentanoate + H2O. It participates in amino-acid biosynthesis; L-isoleucine biosynthesis; L-isoleucine from 2-oxobutanoate: step 3/4. Its pathway is amino-acid biosynthesis; L-valine biosynthesis; L-valine from pyruvate: step 3/4. Its function is as follows. Functions in the biosynthesis of branched-chain amino acids. Catalyzes the dehydration of (2R,3R)-2,3-dihydroxy-3-methylpentanoate (2,3-dihydroxy-3-methylvalerate) into 2-oxo-3-methylpentanoate (2-oxo-3-methylvalerate) and of (2R)-2,3-dihydroxy-3-methylbutanoate (2,3-dihydroxyisovalerate) into 2-oxo-3-methylbutanoate (2-oxoisovalerate), the penultimate precursor to L-isoleucine and L-valine, respectively. In Parabacteroides distasonis (strain ATCC 8503 / DSM 20701 / CIP 104284 / JCM 5825 / NCTC 11152), this protein is Dihydroxy-acid dehydratase.